A 202-amino-acid chain; its full sequence is Glycerol-3-phosphate acyltransferase (202 aa).

A run of 5 helical transmembrane segments spans residues 11-31, 60-80, 88-108, 117-137, and 162-182; these read LLLF…GMVI, AAAA…VLLA, AAQL…WLGF, FLGL…LTWL, and LLLG…VILW.

It belongs to the PlsY family. In terms of assembly, probably interacts with PlsX.

Its subcellular location is the cell inner membrane. It carries out the reaction an acyl phosphate + sn-glycerol 3-phosphate = a 1-acyl-sn-glycero-3-phosphate + phosphate. It functions in the pathway lipid metabolism; phospholipid metabolism. Catalyzes the transfer of an acyl group from acyl-phosphate (acyl-PO(4)) to glycerol-3-phosphate (G3P) to form lysophosphatidic acid (LPA). This enzyme utilizes acyl-phosphate as fatty acyl donor, but not acyl-CoA or acyl-ACP. The chain is Glycerol-3-phosphate acyltransferase from Ruegeria sp. (strain TM1040) (Silicibacter sp.).